A 150-amino-acid chain; its full sequence is 5-hydroxytryptamine receptor 1B (150 aa).

At 1–83 (VEARSRILKQ…AARERKATKT (83 aa)) the chain is on the extracellular side. Residues 27–40 (DSPGSTSSVTSINS) show a composition bias toward polar residues. Positions 27 to 50 (DSPGSTSSVTSINSRAPDLPSESG) are disordered. Residues 84 to 105 (LGIILGAFIVCWLPFFIISLAM) form a helical membrane-spanning segment. Residues 106-115 (PICKDACWFH) are Cytoplasmic-facing. Residues 116 to 138 (LAIFDFFTWLGYLNSLINPIIYT) traverse the membrane as a helical segment. An NPxxY motif; important for ligand-induced conformation changes and signaling motif is present at residues 133 to 137 (NPIIY). The Extracellular portion of the chain corresponds to 139 to 150 (MFNEDFKQAFHK).

The protein belongs to the G-protein coupled receptor 1 family. Homodimer. Heterodimer with HTR1D. In terms of processing, phosphorylated. Desensitization of the receptor may be mediated by its phosphorylation. Palmitoylated.

It localises to the cell membrane. Functionally, G-protein coupled receptor for 5-hydroxytryptamine (serotonin). Also functions as a receptor for ergot alkaloid derivatives, various anxiolytic and antidepressant drugs and other psychoactive substances, such as lysergic acid diethylamide (LSD). Ligand binding causes a conformation change that triggers signaling via guanine nucleotide-binding proteins (G proteins) and modulates the activity of downstream effectors, such as adenylate cyclase. HTR1B is coupled to G(i)/G(o) G alpha proteins and mediates inhibitory neurotransmission by inhibiting adenylate cyclase activity. Arrestin family members inhibit signaling via G proteins and mediate activation of alternative signaling pathways. Regulates the release of 5-hydroxytryptamine, dopamine and acetylcholine in the brain, and thereby affects neural activity, nociceptive processing, pain perception, mood and behavior. Besides, plays a role in vasoconstriction of cerebral arteries. In Sus scrofa (Pig), this protein is 5-hydroxytryptamine receptor 1B (HTR1B).